The following is a 451-amino-acid chain: Probable glycine dehydrogenase (decarboxylating) subunit 1 (451 aa).

Belongs to the GcvP family. N-terminal subunit subfamily. The glycine cleavage system is composed of four proteins: P, T, L and H. In this organism, the P 'protein' is a heterodimer of two subunits.

The catalysed reaction is N(6)-[(R)-lipoyl]-L-lysyl-[glycine-cleavage complex H protein] + glycine + H(+) = N(6)-[(R)-S(8)-aminomethyldihydrolipoyl]-L-lysyl-[glycine-cleavage complex H protein] + CO2. Its function is as follows. The glycine cleavage system catalyzes the degradation of glycine. The P protein binds the alpha-amino group of glycine through its pyridoxal phosphate cofactor; CO(2) is released and the remaining methylamine moiety is then transferred to the lipoamide cofactor of the H protein. In Staphylococcus aureus (strain MSSA476), this protein is Probable glycine dehydrogenase (decarboxylating) subunit 1.